The sequence spans 523 residues: ATP synthase subunit alpha (523 aa).

An ATP-binding site is contributed by 179–186; that stretch reads GDRQTGKT.

The protein belongs to the ATPase alpha/beta chains family. In terms of assembly, F-type ATPases have 2 components, CF(1) - the catalytic core - and CF(0) - the membrane proton channel. CF(1) has five subunits: alpha(3), beta(3), gamma(1), delta(1), epsilon(1). CF(0) has three main subunits: a(1), b(2) and c(9-12). The alpha and beta chains form an alternating ring which encloses part of the gamma chain. CF(1) is attached to CF(0) by a central stalk formed by the gamma and epsilon chains, while a peripheral stalk is formed by the delta and b chains.

The protein resides in the cell inner membrane. The catalysed reaction is ATP + H2O + 4 H(+)(in) = ADP + phosphate + 5 H(+)(out). In terms of biological role, produces ATP from ADP in the presence of a proton gradient across the membrane. The alpha chain is a regulatory subunit. The sequence is that of ATP synthase subunit alpha from Vibrio parahaemolyticus serotype O3:K6 (strain RIMD 2210633).